We begin with the raw amino-acid sequence, 187 residues long: Adenine phosphoribosyltransferase (187 aa).

The protein belongs to the purine/pyrimidine phosphoribosyltransferase family. Homodimer.

The protein resides in the cytoplasm. It catalyses the reaction AMP + diphosphate = 5-phospho-alpha-D-ribose 1-diphosphate + adenine. It participates in purine metabolism; AMP biosynthesis via salvage pathway; AMP from adenine: step 1/1. Catalyzes a salvage reaction resulting in the formation of AMP, that is energically less costly than de novo synthesis. The sequence is that of Adenine phosphoribosyltransferase from Yersinia enterocolitica serotype O:8 / biotype 1B (strain NCTC 13174 / 8081).